Here is a 309-residue protein sequence, read N- to C-terminus: Serine/threonine-protein phosphatase PP2A catalytic subunit (309 aa).

The Mn(2+) site is built by D57, H59, D85, and N117. H118 acts as the Proton donor in catalysis. Mn(2+)-binding residues include H167 and H241.

Belongs to the PPP phosphatase family. PP-2A subfamily. Mn(2+) is required as a cofactor.

The enzyme catalyses O-phospho-L-seryl-[protein] + H2O = L-seryl-[protein] + phosphate. It carries out the reaction O-phospho-L-threonyl-[protein] + H2O = L-threonyl-[protein] + phosphate. The sequence is that of Serine/threonine-protein phosphatase PP2A catalytic subunit from Brassica napus (Rape).